The following is a 376-amino-acid chain: 23S rRNA (uracil(747)-C(5))-methyltransferase RlmC (376 aa).

The [4Fe-4S] cluster site is built by cysteine 3, cysteine 11, cysteine 14, and cysteine 87. Residues glutamine 212, phenylalanine 241, glutamate 262, and asparagine 307 each contribute to the S-adenosyl-L-methionine site. Cysteine 334 functions as the Nucleophile in the catalytic mechanism.

The protein belongs to the class I-like SAM-binding methyltransferase superfamily. RNA M5U methyltransferase family. RlmC subfamily.

It carries out the reaction uridine(747) in 23S rRNA + S-adenosyl-L-methionine = 5-methyluridine(747) in 23S rRNA + S-adenosyl-L-homocysteine + H(+). Functionally, catalyzes the formation of 5-methyl-uridine at position 747 (m5U747) in 23S rRNA. This is 23S rRNA (uracil(747)-C(5))-methyltransferase RlmC from Salmonella choleraesuis (strain SC-B67).